The following is a 370-amino-acid chain: tRNA (guanine(9)-/adenine(9)-N1)-methyltransferase (370 aa).

The SAM-dependent MTase TRM10-type domain occupies 87 to 292; it reads TPEELREKLP…KELPKRATRY (206 aa).

The protein belongs to the class IV-like SAM-binding methyltransferase superfamily. TRM10 family.

It is found in the cytoplasm. It carries out the reaction adenosine(9) in tRNA + S-adenosyl-L-methionine = N(1)-methyladenosine(9) in tRNA + S-adenosyl-L-homocysteine + H(+). The enzyme catalyses guanosine(9) in tRNA + S-adenosyl-L-methionine = N(1)-methylguanosine(9) in tRNA + S-adenosyl-L-homocysteine + H(+). Catalyzes the S-adenosyl-L-methionine-dependent formation of either N(1)-methyladenine or N(1)-methylguanine at position 9 (m1A9 or m1G9) in tRNA. The protein is tRNA (guanine(9)-/adenine(9)-N1)-methyltransferase of Thermococcus kodakarensis (strain ATCC BAA-918 / JCM 12380 / KOD1) (Pyrococcus kodakaraensis (strain KOD1)).